A 309-amino-acid chain; its full sequence is Tagatose-6-phosphate kinase (309 aa).

It belongs to the carbohydrate kinase PfkB family. LacC subfamily.

The enzyme catalyses D-tagatofuranose 6-phosphate + ATP = D-tagatofuranose 1,6-bisphosphate + ADP + H(+). It participates in carbohydrate metabolism; D-tagatose 6-phosphate degradation; D-glyceraldehyde 3-phosphate and glycerone phosphate from D-tagatose 6-phosphate: step 1/2. The protein is Tagatose-6-phosphate kinase of Streptococcus pneumoniae (strain Taiwan19F-14).